A 314-amino-acid chain; its full sequence is Ribosomal protein L11 methyltransferase (314 aa).

Positions 163, 184, 206, and 248 each coordinate S-adenosyl-L-methionine.

It belongs to the methyltransferase superfamily. PrmA family.

Its subcellular location is the cytoplasm. The catalysed reaction is L-lysyl-[protein] + 3 S-adenosyl-L-methionine = N(6),N(6),N(6)-trimethyl-L-lysyl-[protein] + 3 S-adenosyl-L-homocysteine + 3 H(+). Methylates ribosomal protein L11. This is Ribosomal protein L11 methyltransferase from Lactobacillus delbrueckii subsp. bulgaricus (strain ATCC BAA-365 / Lb-18).